Reading from the N-terminus, the 215-residue chain is MSKVYDWFEERLEIQAIADDITSKYVPPHVNIFYCLGGITLTCFLVQVATGFAMTFYYRPTVTEAFASVQYIMTEANFGWLIRSVHRWSASMMVLMMILHVFRVYLTGGFKKPRELTWVTGVVLGVLTASFGVTGYSLPWDQIGYWAVKIVTGVPEAIPVIGSSVVELLRGSASVGQSTLTRFYSLHTFVLPLLTAVFMLMHFSMIRKQGISGPL.

A helical membrane pass occupies residues 32–52 (IFYCLGGITLTCFLVQVATGF). Cys35 is a binding site for heme c. Heme b is bound by residues His86 and His100. The next 3 helical transmembrane spans lie at 90–110 (ASMM…TGGF), 116–136 (LTWV…VTGY), and 186–206 (LHTF…FSMI). Residues His187 and His202 each coordinate heme b.

It belongs to the cytochrome b family. PetB subfamily. In terms of assembly, the 4 large subunits of the cytochrome b6-f complex are cytochrome b6, subunit IV (17 kDa polypeptide, PetD), cytochrome f and the Rieske protein, while the 4 small subunits are PetG, PetL, PetM and PetN. The complex functions as a dimer. Requires heme b as cofactor. Heme c serves as cofactor.

It localises to the plastid. Its subcellular location is the chloroplast thylakoid membrane. Component of the cytochrome b6-f complex, which mediates electron transfer between photosystem II (PSII) and photosystem I (PSI), cyclic electron flow around PSI, and state transitions. This chain is Cytochrome b6, found in Lotus japonicus (Lotus corniculatus var. japonicus).